The primary structure comprises 324 residues: Endochitinase 1 (324 aa).

The first 22 residues, 1–22, serve as a signal peptide directing secretion; the sequence is MSFLQALSIFLLLLLYVVVGSA. Residues 23-64 enclose the Chitin-binding type-1 domain; the sequence is EQCGRQAGGALCPGGLCCSQFGWCGSTADYCTVPGCQSQCSG. 7 disulfide bridges follow: Cys-25–Cys-40, Cys-34–Cys-46, Cys-39–Cys-53, Cys-58–Cys-62, Cys-95–Cys-158, Cys-170–Cys-178, and Cys-277–Cys-309. Residue Glu-139 is the Proton donor of the active site. Positions 318-324 are cleaved as a propeptide — removed in mature form; it reads GVSVDSM.

Belongs to the glycosyl hydrolase 19 family. Chitinase class I subfamily.

The enzyme catalyses Random endo-hydrolysis of N-acetyl-beta-D-glucosaminide (1-&gt;4)-beta-linkages in chitin and chitodextrins.. In terms of biological role, defense against chitin-containing fungal pathogens. This Gossypium hirsutum (Upland cotton) protein is Endochitinase 1.